Here is a 53-residue protein sequence, read N- to C-terminus: MRVCSFCHEEIEPGTGKMYVKRDGTIYFFCSSKCEKNMIKLGRVPRKVKWVKK.

Residues C4, C7, C30, and C34 each coordinate Zn(2+). The C4-type zinc finger occupies 4–34 (CSFCHEEIEPGTGKMYVKRDGTIYFFCSSKC).

This sequence belongs to the eukaryotic ribosomal protein eL24 family. As to quaternary structure, part of the 50S ribosomal subunit. Forms a cluster with proteins L3 and L14. Zn(2+) is required as a cofactor.

Its function is as follows. Binds to the 23S rRNA. The chain is Large ribosomal subunit protein eL24 from Methanothermobacter thermautotrophicus (strain ATCC 29096 / DSM 1053 / JCM 10044 / NBRC 100330 / Delta H) (Methanobacterium thermoautotrophicum).